The chain runs to 444 residues: Tubulin beta chain (444 aa).

The MREI motif signature appears at 1–4; sequence MREI. Gln-11 serves as a coordination point for GTP. At Ser-40 the chain carries Phosphoserine. A Phosphothreonine modification is found at Thr-55. Residue Lys-58 is modified to N6-acetyllysine; alternate. Lys-58 bears the N6-succinyllysine; alternate mark. Lys-58 participates in a covalent cross-link: Glycyl lysine isopeptide (Lys-Gly) (interchain with G-Cter in ubiquitin); alternate. Residues Glu-69, Ser-138, Gly-142, Thr-143, and Gly-144 each coordinate GTP. Glu-69 is a Mg(2+) binding site. Phosphoserine; by CDK1 is present on Ser-172. GTP contacts are provided by Asn-204 and Asn-226. Thr-285 and Thr-290 each carry phosphothreonine. Arg-318 bears the Omega-N-methylarginine mark. Lys-324 is covalently cross-linked (Glycyl lysine isopeptide (Lys-Gly) (interchain with G-Cter in ubiquitin)). Residues 423–444 are disordered; the sequence is QQYQDATAEEEEDFGEEAEEEA. Over residues 429-444 the composition is skewed to acidic residues; it reads TAEEEEDFGEEAEEEA. 5-glutamyl polyglutamate occurs at positions 434, 438, 439, and 441. 5-glutamyl glycine is present on residues Glu-438, Glu-439, Glu-441, Glu-442, and Glu-443.

This sequence belongs to the tubulin family. Heterodimer of alpha and beta chains. A typical microtubule is a hollow water-filled tube with an outer diameter of 25 nm and an inner diameter of 15 nM. Alpha-beta heterodimers associate head-to-tail to form protofilaments running lengthwise along the microtubule wall with the beta-tubulin subunit facing the microtubule plus end conferring a structural polarity. Microtubules usually have 13 protofilaments but different protofilament numbers can be found in some organisms and specialized cells. Interacts with CIMAP3. Interacts with DIAPH1. Interacts with MX1. May interact with RNABP10. Interacts with CFAP157. Nascent tubulin polypeptide interacts (via beta-tubulin MREI motif) with TTC5/STRAP; this interaction results in tubulin mRNA-targeted degradation. Mg(2+) is required as a cofactor. Some glutamate residues at the C-terminus are polyglycylated, resulting in polyglycine chains on the gamma-carboxyl group. Glycylation is mainly limited to tubulin incorporated into axonemes (cilia and flagella) whereas glutamylation is prevalent in neuronal cells, centrioles, axonemes, and the mitotic spindle. Both modifications can coexist on the same protein on adjacent residues, and lowering polyglycylation levels increases polyglutamylation, and reciprocally. Cilia and flagella glycylation is required for their stability and maintenance. Flagella glycylation controls sperm motility. In terms of processing, some glutamate residues at the C-terminus are polyglutamylated, resulting in polyglutamate chains on the gamma-carboxyl group. Polyglutamylation plays a key role in microtubule severing by spastin (SPAST). SPAST preferentially recognizes and acts on microtubules decorated with short polyglutamate tails: severing activity by SPAST increases as the number of glutamates per tubulin rises from one to eight, but decreases beyond this glutamylation threshold. Glutamylation is also involved in cilia motility. Post-translationally, phosphorylated on Ser-172 by CDK1 during the cell cycle, from metaphase to telophase, but not in interphase. This phosphorylation inhibits tubulin incorporation into microtubules.

It is found in the cytoplasm. It localises to the cytoskeleton. Functionally, tubulin is the major constituent of microtubules, a cylinder consisting of laterally associated linear protofilaments composed of alpha- and beta-tubulin heterodimers. Microtubules grow by the addition of GTP-tubulin dimers to the microtubule end, where a stabilizing cap forms. Below the cap, tubulin dimers are in GDP-bound state, owing to GTPase activity of alpha-tubulin. The sequence is that of Tubulin beta chain (TUBB) from Sus scrofa (Pig).